The following is a 147-amino-acid chain: Large ribosomal subunit protein uL15 (147 aa).

The span at 1–13 (MRLHDLKPAEGAR) shows a compositional bias: basic and acidic residues. Residues 1–58 (MRLHDLKPAEGARRERKRVGRGIGSGHGKTSGRGQKGQKARSGGGVRPGFEGGQMPLT) form a disordered region. Composition is skewed to gly residues over residues 21–35 (RGIGSGHGKTSGRGQ) and 42–52 (SGGGVRPGFEG).

This sequence belongs to the universal ribosomal protein uL15 family. In terms of assembly, part of the 50S ribosomal subunit.

Its function is as follows. Binds to the 23S rRNA. In Thermoanaerobacter sp. (strain X514), this protein is Large ribosomal subunit protein uL15.